The primary structure comprises 300 residues: Dipeptide transport system permease protein DppC (300 aa).

Topologically, residues 1–31 are cytoplasmic; the sequence is MSQVTENKVISAPVPMTPLQEFWHYFKRNKG. The chain crosses the membrane as a helical span at residues 32 to 52; the sequence is AVVGLVYVVIVLFIAIFANWI. Residues 53–101 lie on the Periplasmic side of the membrane; it reads APYNPAEQFRDALLAPPAWQEGGSMAHLLGTDDVGRDVLSRLMYGARLS. The 190-residue stretch at 98-287 folds into the ABC transmembrane type-1 domain; the sequence is ARLSLLVGCL…LTVLAFNLMG (190 aa). Residues 102–122 traverse the membrane as a helical segment; it reads LLVGCLVVVLSLIMGVILGLI. Topologically, residues 123-136 are cytoplasmic; that stretch reads AGYFGGLVDNIIMR. Residues 137-157 form a helical membrane-spanning segment; the sequence is VVDIMLALPSLLLALVLVAIF. Over 158 to 206 the chain is Periplasmic; that stretch reads GPSIGNAALALTFVALPHYVRLTRAAVLVEVNRDYVTASRVAGAGAMRQ. A helical membrane pass occupies residues 207–227; the sequence is MFINIFPNCLAPLIVQASLGF. Over 228–230 the chain is Cytoplasmic; the sequence is SNA. The helical transmembrane segment at 231-251 threads the bilayer; it reads ILDMAALGFLGMGAQPPTPEW. Over 252–265 the chain is Periplasmic; the sequence is GTMLSDVLQFAQSA. A helical membrane pass occupies residues 266-286; sequence WWVVTFPGLAILLTVLAFNLM. Over 287–300 the chain is Cytoplasmic; it reads GDGLRDALDPKLKQ.

The protein belongs to the binding-protein-dependent transport system permease family. OppBC subfamily. In terms of assembly, the complex is composed of two ATP-binding proteins (DppD and DppF), two transmembrane proteins (DppB and DppC) and a solute-binding protein (DppA).

Its subcellular location is the cell inner membrane. Functionally, part of the ABC transporter DppABCDF involved in dipeptide transport. Responsible for the translocation of the substrate across the membrane. This Escherichia coli O157:H7 protein is Dipeptide transport system permease protein DppC (dppC).